The primary structure comprises 691 residues: Elongation factor G (691 aa).

Residues 8-283 (EDYRNFGIMA…AVVDYLPTPI (276 aa)) enclose the tr-type G domain. GTP is bound by residues 17 to 24 (AHIDAGKT), 81 to 85 (DTPGH), and 135 to 138 (NKMD).

Belongs to the TRAFAC class translation factor GTPase superfamily. Classic translation factor GTPase family. EF-G/EF-2 subfamily.

The protein resides in the cytoplasm. Its function is as follows. Catalyzes the GTP-dependent ribosomal translocation step during translation elongation. During this step, the ribosome changes from the pre-translocational (PRE) to the post-translocational (POST) state as the newly formed A-site-bound peptidyl-tRNA and P-site-bound deacylated tRNA move to the P and E sites, respectively. Catalyzes the coordinated movement of the two tRNA molecules, the mRNA and conformational changes in the ribosome. In Beijerinckia indica subsp. indica (strain ATCC 9039 / DSM 1715 / NCIMB 8712), this protein is Elongation factor G.